The primary structure comprises 303 residues: Ribonuclease P protein subunit p40 (303 aa).

In terms of assembly, component of nuclear RNase P and RNase MRP ribonucleoproteins. RNase P consists of a catalytic RNA moiety and about 10 protein subunits; POP1, POP4, POP5, POP7, RPP14, RPP21, RPP25, RPP30, RPP38 and RPP40. Within the RNase P complex, POP1, POP7 and RPP25 form the 'finger' subcomplex, POP5, RPP14, RPP40 and homodimeric RPP30 form the 'palm' subcomplex, and RPP21, POP4 and RPP38 form the 'wrist' subcomplex. All subunits of the RNase P complex interact with the catalytic RNA. Several subunits of RNase P are also part of the RNase MRP complex. RNase MRP consists of a catalytic RNA moiety and about 8 protein subunits; POP1, POP7, RPP25, RPP30, RPP38, RPP40 and possibly also POP4 and POP5.

The protein resides in the nucleus. Its subcellular location is the nucleolus. In terms of biological role, component of ribonuclease P, a ribonucleoprotein complex that generates mature tRNA molecules by cleaving their 5'-ends. Also a component of the MRP ribonuclease complex, which cleaves pre-rRNA sequences. The protein is Ribonuclease P protein subunit p40 (RPP40) of Bos taurus (Bovine).